We begin with the raw amino-acid sequence, 90 residues long: Lantipeptide prochlorosin 1.7 (90 aa).

The propeptide occupies 1-68 (MSEEQLKAFI…DAELEGVAGG (68 aa)). Threonine 69 and threonine 73 each carry 2,3-didehydrobutyrine. Positions 76–79 (SITC) form a cross-link, lanthionine (Ser-Cys). 2 consecutive cross-links (beta-methyllanthionine (Thr-Cys)) follow at residues 78 to 82 (TCETC) and 81 to 90 (TCDLLVGKMC).

Cross-links are proved in vitro, when coepressed in E.coli with the ProcM lanthionine synthetase. Post-translationally, the lanthionine residue has a DL configuration (with 2S,6R stereochemistry), whereas the beta-methyllanthionine residues have a DL configuration (with 2S,3S,6R stereochemistry). In terms of processing, maturation of prochlorosin involves the enzymatic conversion of Thr, and Ser into dehydrated AA and the formation of thioether bonds with cysteines. This is followed by membrane translocation and cleavage of the modified precursor.

It localises to the secreted. In terms of biological role, lanthionine-containing peptide (lantipeptide) with unknown function. Does not show antibiotic activity against Lactococcus lactis 117 and Bacillus subtilis 6633 bacteria. Organisms that produce this peptide live in oligotrophic environments at very dilute concentrations, suggesting this peptide is not secreted to influence other bacteria. The polypeptide is Lantipeptide prochlorosin 1.7 (Prochlorococcus marinus (strain MIT 9313)).